The primary structure comprises 306 residues: Large ribosomal subunit protein mL45 (306 aa).

Residues 287–306 form a disordered region; the sequence is LKPEEEYEEAQGEAQKPQLA.

Belongs to the mitochondrion-specific ribosomal protein mL45 family. In terms of assembly, component of the mitochondrial large ribosomal subunit (mt-LSU). Mature mammalian 55S mitochondrial ribosomes consist of a small (28S) and a large (39S) subunit. The 28S small subunit contains a 12S ribosomal RNA (12S mt-rRNA) and 30 different proteins. The 39S large subunit contains a 16S rRNA (16S mt-rRNA), a copy of mitochondrial valine transfer RNA (mt-tRNA(Val)), which plays an integral structural role, and 52 different proteins.

The protein resides in the mitochondrion. In terms of biological role, component of the mitochondrial large ribosomal subunit (mt-LSU). Within the mitochondrial ribosomes, required to direct the nascent polypeptide toward the tunnel exit and position the exit at a distance from the membrane surface. This chain is Large ribosomal subunit protein mL45, found in Homo sapiens (Human).